A 218-amino-acid polypeptide reads, in one-letter code: MANSSPVYDWFQERLEIQDIADDISSKYVPPHVNIFYCLGGITLVCFLIQFATGFAMTFYYKPTVAEAYSSVQYLMTDVSFGWLIRSVHRWSASMMVLMLILHVFRVYLTGGFKRPRELTWVTGVTMAVITVSFGVTGYSLPWDQVGYWAVKIVSGVPAAIPVVGDFMVELLRGGESVGQSTLTRFYSLHTFVMPWLLAVFMLMHFLMIRKQGISGPL.

Residues 35 to 55 form a helical membrane-spanning segment; that stretch reads IFYCLGGITLVCFLIQFATGF. Cysteine 38 lines the heme c pocket. The heme b site is built by histidine 89 and histidine 103. 3 helical membrane passes run 93-113, 119-139, and 189-209; these read ASMM…TGGF, LTWV…VTGY, and LHTF…FLMI. The heme b site is built by histidine 190 and histidine 205.

Belongs to the cytochrome b family. PetB subfamily. As to quaternary structure, the 4 large subunits of the cytochrome b6-f complex are cytochrome b6, subunit IV (17 kDa polypeptide, PetD), cytochrome f and the Rieske protein, while the 4 small subunits are PetG, PetL, PetM and PetN. The complex functions as a dimer. Heme b serves as cofactor. Heme c is required as a cofactor.

The protein localises to the cellular thylakoid membrane. In terms of biological role, component of the cytochrome b6-f complex, which mediates electron transfer between photosystem II (PSII) and photosystem I (PSI), cyclic electron flow around PSI, and state transitions. In Synechococcus sp. (strain WH7803), this protein is Cytochrome b6.